The primary structure comprises 76 residues: Protein sigN132 (76 aa).

The span at 1–13 (MLFESISTLSNLK) shows a compositional bias: polar residues. Residues 1 to 33 (MLFESISTLSNLKSASKSSMIASTGSTSSKSSN) form a disordered region. A compositionally biased stretch (low complexity) spans 14–33 (SASKSSMIASTGSTSSKSSN).

This is Protein sigN132 from Dictyostelium discoideum (Social amoeba).